The chain runs to 389 residues: Chalcone synthase 1 (389 aa).

Residue Cys-164 is part of the active site.

It belongs to the thiolase-like superfamily. Chalcone/stilbene synthases family.

The enzyme catalyses (E)-4-coumaroyl-CoA + 3 malonyl-CoA + 3 H(+) = 2',4,4',6'-tetrahydroxychalcone + 3 CO2 + 4 CoA. It functions in the pathway secondary metabolite biosynthesis; flavonoid biosynthesis. Its function is as follows. The primary product of this enzyme is 4,2',4',6'-tetrahydroxychalcone (also termed naringenin-chalcone or chalcone) which can under specific conditions spontaneously isomerize into naringenin. The sequence is that of Chalcone synthase 1 (CHS1) from Trifolium subterraneum (Subterranean clover).